Reading from the N-terminus, the 451-residue chain is POU domain, class 3, transcription factor 1 (451 aa).

5 disordered regions span residues 1–21, 69–114, 134–154, 186–253, and 395–451; these read MATT…GTGP, AHPQ…GFHA, AHHL…HQPQ, GLHH…PSSD, and KRMT…GSVQ. Composition is skewed to gly residues over residues 11–20, 76–85, and 95–112; these read GPGGGAGGTG, TGGGGGGDWA, and AGGG…GGGF. A compositionally biased stretch (low complexity) spans 134–145; that stretch reads AHHLGPAMSPSP. Residues 190 to 199 are compositionally biased toward basic and acidic residues; sequence ALHEDGHEAQ. The segment covering 220 to 232 has biased composition (low complexity); the sequence is AGGLHAAAAHLHP. One can recognise a POU-specific domain in the interval 247–321; it reads EDAPSSDDLE…LLNKWLEETD (75 aa). The segment at residues 339 to 398 is a DNA-binding region (homeobox); sequence KRKKRTSIEVGVKGALESHFLKCPKPSAHEITGLADSLQLEKEVVRVWFCNRRQKEKRMT. Over residues 427 to 436 the composition is skewed to pro residues; sequence PSAPPPPPPA.

This sequence belongs to the POU transcription factor family. Class-3 subfamily. As to expression, neural tissues and testis.

The protein resides in the nucleus. In terms of biological role, transcription factor that binds to the octamer motif (5'-ATTTGCAT-3'). Acts as a transcriptional activator when binding cooperatively with SOX4, SOX11, or SOX12 to gene promoters. Acts as a transcriptional repressor of myelin-specific genes. The protein is POU domain, class 3, transcription factor 1 (Pou3f1) of Rattus norvegicus (Rat).